The sequence spans 342 residues: MKEKKKEIEKLLARPDLTPEQMKNYGMEYAKIEEIENITNRIKETQEFIELLREEGENELEIEKYEKELDQLYQELLFLLSPEASDKAIVEIRPGTGGEEAALFARDLFRMYTRYAERKGWNLEVAEIHETDLGGIREVVFFVKGKNAYGILKYESGVHRVQRVPVTESGGRIHTSTATVAVLPEIEEKDIEIRPEDLKIETFRASGHGGQYVNKTESAVRITHLPTGIVVSCQNERSQYQNKQTALRILRARLYQLQKEQKEREISQKRKSQIGTGERSEKIRTYNFPQNRVTDHRINYTSYRLQEILDGDLDEIISKLIEHDIENNLEEVLGIGASVEEK.

Q211 is modified (N5-methylglutamine). Residues 262-282 form a disordered region; the sequence is KEREISQKRKSQIGTGERSEK.

It belongs to the prokaryotic/mitochondrial release factor family. Methylated by PrmC. Methylation increases the termination efficiency of RF1.

Its subcellular location is the cytoplasm. In terms of biological role, peptide chain release factor 1 directs the termination of translation in response to the peptide chain termination codons UAG and UAA. The polypeptide is Peptide chain release factor 1 (prfA) (Thermotoga maritima (strain ATCC 43589 / DSM 3109 / JCM 10099 / NBRC 100826 / MSB8)).